The chain runs to 539 residues: O-phosphoserine--tRNA(Cys) ligase (539 aa).

Substrate is bound by residues 188–190 (HMT), 233–235 (SAS), 275–276 (YY), and Asn327.

The protein belongs to the class-II aminoacyl-tRNA synthetase family. O-phosphoseryl-tRNA(Cys) synthetase subfamily. Homotetramer. Interacts with SepCysS.

The catalysed reaction is tRNA(Cys) + O-phospho-L-serine + ATP = O-phospho-L-seryl-tRNA(Cys) + AMP + diphosphate. In terms of biological role, catalyzes the attachment of O-phosphoserine (Sep) to tRNA(Cys). This chain is O-phosphoserine--tRNA(Cys) ligase, found in Methanosarcina mazei (strain ATCC BAA-159 / DSM 3647 / Goe1 / Go1 / JCM 11833 / OCM 88) (Methanosarcina frisia).